Here is a 114-residue protein sequence, read N- to C-terminus: Large ribosomal subunit protein uL24 (114 aa).

The protein belongs to the universal ribosomal protein uL24 family. In terms of assembly, part of the 50S ribosomal subunit.

One of two assembly initiator proteins, it binds directly to the 5'-end of the 23S rRNA, where it nucleates assembly of the 50S subunit. Its function is as follows. One of the proteins that surrounds the polypeptide exit tunnel on the outside of the subunit. This chain is Large ribosomal subunit protein uL24, found in Acidothermus cellulolyticus (strain ATCC 43068 / DSM 8971 / 11B).